Reading from the N-terminus, the 720-residue chain is Viral guanylyltransferase VP3 (720 aa).

It is found in the virion. The catalysed reaction is a 5'-end diphospho-ribonucleoside in mRNA + GTP + H(+) = a 5'-end (5'-triphosphoguanosine)-ribonucleoside in mRNA + diphosphate. The enzyme catalyses a 5'-end (5'-triphosphoguanosine)-ribonucleoside in mRNA + S-adenosyl-L-methionine = a 5'-end (N(7)-methyl 5'-triphosphoguanosine)-ribonucleoside in mRNA + S-adenosyl-L-homocysteine. Outer capsid protein involved in mRNA capping. Catalyzes the last 3 enzymatic activities for formation of the 5' cap structure on the viral plus-strand transcripts, namely the RNA guanylyltransferase, RNA-7N- and RNA-2'O-methyltransferase activities. The sequence is that of Viral guanylyltransferase VP3 (Segment-3) from Banna virus (BAV).